A 265-amino-acid chain; its full sequence is UPF0354 protein GTNG_2723 (265 aa).

It belongs to the UPF0354 family.

This Geobacillus thermodenitrificans (strain NG80-2) protein is UPF0354 protein GTNG_2723.